Consider the following 230-residue polypeptide: 7-cyano-7-deazaguanine synthase (230 aa).

Leu16–Gly26 lines the ATP pocket. Zn(2+)-binding residues include Cys195, Cys205, Cys208, and Cys211.

It belongs to the QueC family. It depends on Zn(2+) as a cofactor.

The enzyme catalyses 7-carboxy-7-deazaguanine + NH4(+) + ATP = 7-cyano-7-deazaguanine + ADP + phosphate + H2O + H(+). It functions in the pathway purine metabolism; 7-cyano-7-deazaguanine biosynthesis. Its function is as follows. Catalyzes the ATP-dependent conversion of 7-carboxy-7-deazaguanine (CDG) to 7-cyano-7-deazaguanine (preQ(0)). The polypeptide is 7-cyano-7-deazaguanine synthase (Rhizorhabdus wittichii (strain DSM 6014 / CCUG 31198 / JCM 15750 / NBRC 105917 / EY 4224 / RW1) (Sphingomonas wittichii)).